Reading from the N-terminus, the 372-residue chain is Cytoplasmic tRNA 2-thiolation protein 1 (372 aa).

The interval 335 to 372 (GKKEDGGCGSGGGGCGCAGAADETENEETRKRLKDLQF) is disordered. The span at 341-351 (GCGSGGGGCGC) shows a compositional bias: gly residues. The span at 361–372 (EETRKRLKDLQF) shows a compositional bias: basic and acidic residues.

This sequence belongs to the TtcA family. CTU1/NCS6/ATPBD3 subfamily.

Its subcellular location is the cytoplasm. It participates in tRNA modification; 5-methoxycarbonylmethyl-2-thiouridine-tRNA biosynthesis. Plays a central role in 2-thiolation of mcm(5)S(2)U at tRNA wobble positions of tRNA(Lys), tRNA(Glu) and tRNA(Gln). Directly binds tRNAs and probably acts by catalyzing adenylation of tRNAs, an intermediate required for 2-thiolation. It is unclear whether it acts as a sulfurtransferase that transfers sulfur from thiocarboxylated URM1 onto the uridine of tRNAs at wobble position. The protein is Cytoplasmic tRNA 2-thiolation protein 1 of Caenorhabditis briggsae.